The sequence spans 663 residues: Protein pat-12 (663 aa).

Polar residues predominate over residues 1–15; that stretch reads MTSHIATETSVNRWS. Disordered stretches follow at residues 1-78, 367-430, 517-546, and 597-663; these read MTSH…SGDY, RFEE…GQET, FRRG…DYRR, and PMPA…RRRR. Positions 367–380 are enriched in basic and acidic residues; that stretch reads RFEETRRTEEVERR. The segment covering 381 to 400 has biased composition (basic residues); sequence VQRREKKERRSRHHSSSRHH. The segment covering 517–526 has biased composition (polar residues); sequence FRRGSQQQVS. Composition is skewed to basic and acidic residues over residues 620–640 and 649–663; these read FNKE…KPVD and NYKR…RRRR.

In terms of assembly, interacts with vab-10 (via plankin domain). Isoform a: Expressed in the uterus, the vulva, the rectum, mechanosensory neurons and in head and tail neurons. Isoform e: Expressed in spermatheca and weakly in the vulva. Isoform f: Expressed in spermatheca and weakly in the vulva. Isoform i: Expressed in spermatheca and weakly in the vulva.

It localises to the apical cell membrane. Its subcellular location is the basal cell membrane. The protein localises to the cytoplasm. The protein resides in the cell junction. It is found in the hemidesmosome. It localises to the cell membrane. Its subcellular location is the cytoskeleton. In terms of biological role, required for embryonic morphology and development. Plays both a functional and a structural role in the maintenance and probably biogenesis of fibrous organelles, a hemidesomosome-like junction structure, which ensures muscle stability and muscle connection to the external cuticle. In Caenorhabditis elegans, this protein is Protein pat-12.